Consider the following 301-residue polypeptide: MEKRALVTAISLSMSLLALMLLVTAIFTDHWYETDTRRHKENCDQYGSESNDQKNREMPIYHLPLVDSGNAKRNLALMKPIHVGSREEELLENWRAILGMGILETECGRPLFSTYSGLWRKCYFQGMDRDIDKLILKGIAERCTSVKYHFSQPIRLRNIPLNLTRTIQQDEWHLLHLRRITAGFLGMAAAVMLCGSIVAAVGFFWEESLTQHVSGLLFLMAGIFCTISLCTYAASVSYDLSRNPPFIYGLPSDVDHGYGWSIFCAWVSLGLTVASGCICTTYPFLSRTKALRSKTARESSV.

A signal peptide spans 1 to 25 (MEKRALVTAISLSMSLLALMLLVTA). Over 26–183 (IFTDHWYETD…LLHLRRITAG (158 aa)) the chain is Extracellular. Asn162 is a glycosylation site (N-linked (GlcNAc...) asparagine). A helical membrane pass occupies residues 184 to 204 (FLGMAAAVMLCGSIVAAVGFF). Residues 205 to 215 (WEESLTQHVSG) are Cytoplasmic-facing. The helical transmembrane segment at 216 to 236 (LLFLMAGIFCTISLCTYAASV) threads the bilayer. Residues 237 to 258 (SYDLSRNPPFIYGLPSDVDHGY) lie on the Extracellular side of the membrane. The chain crosses the membrane as a helical span at residues 259–279 (GWSIFCAWVSLGLTVASGCIC). Over 280 to 301 (TTYPFLSRTKALRSKTARESSV) the chain is Cytoplasmic.

It belongs to the TMEM178 family.

Its subcellular location is the endoplasmic reticulum membrane. Its function is as follows. May act as a negative regulator of osteoclast differentiation. This Danio rerio (Zebrafish) protein is Transmembrane protein 178A (tmem178a).